The chain runs to 404 residues: 1-deoxy-D-xylulose 5-phosphate reductoisomerase (404 aa).

The NADPH site is built by Thr-10, Gly-11, Ser-12, Ile-13, Gly-36, Arg-37, Asn-38, and Asn-124. 1-deoxy-D-xylulose 5-phosphate is bound at residue Lys-125. An NADPH-binding site is contributed by Glu-126. Asp-150 serves as a coordination point for Mn(2+). Residues Ser-151, Glu-152, Ser-186, and His-209 each coordinate 1-deoxy-D-xylulose 5-phosphate. Glu-152 contacts Mn(2+). Gly-215 lines the NADPH pocket. 1-deoxy-D-xylulose 5-phosphate contacts are provided by Ser-222, Asn-227, Lys-228, and Glu-231. Glu-231 contacts Mn(2+).

It belongs to the DXR family. Homodimer. Mg(2+) serves as cofactor. Requires Mn(2+) as cofactor.

The enzyme catalyses 2-C-methyl-D-erythritol 4-phosphate + NADP(+) = 1-deoxy-D-xylulose 5-phosphate + NADPH + H(+). It participates in isoprenoid biosynthesis; isopentenyl diphosphate biosynthesis via DXP pathway; isopentenyl diphosphate from 1-deoxy-D-xylulose 5-phosphate: step 1/6. Functionally, catalyzes the NADPH-dependent rearrangement and reduction of 1-deoxy-D-xylulose-5-phosphate (DXP) to 2-C-methyl-D-erythritol 4-phosphate (MEP). The protein is 1-deoxy-D-xylulose 5-phosphate reductoisomerase of Erwinia tasmaniensis (strain DSM 17950 / CFBP 7177 / CIP 109463 / NCPPB 4357 / Et1/99).